Consider the following 498-residue polypeptide: Protein spinster homolog 3 (498 aa).

12 helical membrane-spanning segments follow: residues 49–71, 87–107, 114–134, 148–168, 175–195, 207–227, 260–280, 309–329, 343–363, 373–393, 407–427, and 451–471; these read IAVAVLCYINLLNYMDRYTIAGV, GLLQTVFICSFMFLAPVFGYL, KLIMIVGLVMWIVTTLGSSFV, LVGTGEASYSTIAPTIIGDLF, LMISFFYIFIPVGSGLGYIIG, WALRVSPALGGLGLLLLVFLI, FVWSSLGVTAMAFVTGALAFW, YIFGAITVVTGVVGVFLGTCI, LICAVGMLSSSPCFFIAIVLA, FIAIGETLLSLNWAILADILL, LQIMVCHLLGDAGSPYLIGAI, and LLCPFIGVLGGLFFLMTSLYI.

Belongs to the major facilitator superfamily. Spinster (TC 2.A.1.49) family.

The protein resides in the membrane. In terms of biological role, sphingolipid transporter. In Danio rerio (Zebrafish), this protein is Protein spinster homolog 3 (spns3).